Consider the following 429-residue polypeptide: Adenylosuccinate synthetase (429 aa).

GTP-binding positions include 12–18 and 40–42; these read GDEGKGK and GHT. Aspartate 13 (proton acceptor) is an active-site residue. Mg(2+) is bound by residues aspartate 13 and glycine 40. IMP contacts are provided by residues 13-16, 38-41, threonine 129, arginine 143, glutamine 224, threonine 239, and arginine 303; these read DEGK and NAGH. Residue histidine 41 is the Proton donor of the active site. 299-305 contributes to the substrate binding site; it reads VTTGRAR. GTP contacts are provided by residues arginine 305, 331 to 333, and 413 to 415; these read KLD and GVG.

This sequence belongs to the adenylosuccinate synthetase family. Homodimer. The cofactor is Mg(2+).

The protein localises to the cytoplasm. It carries out the reaction IMP + L-aspartate + GTP = N(6)-(1,2-dicarboxyethyl)-AMP + GDP + phosphate + 2 H(+). It participates in purine metabolism; AMP biosynthesis via de novo pathway; AMP from IMP: step 1/2. Its function is as follows. Plays an important role in the de novo pathway of purine nucleotide biosynthesis. Catalyzes the first committed step in the biosynthesis of AMP from IMP. This chain is Adenylosuccinate synthetase, found in Rhodococcus jostii (strain RHA1).